The following is a 734-amino-acid chain: Cytosolic endo-beta-N-acetylglucosaminidase (734 aa).

Met1 carries the N-acetylmethionine modification. The interval 1–45 (METSSVLTRGAARQRSPAAPEKQARDQTERRPGRRRQGRRINEDQ) is disordered. A compositionally biased stretch (basic and acidic residues) spans 22–31 (KQARDQTERR). One can recognise a BRCT domain in the interval 281 to 375 (QNRVFFDSCD…DFFQNQDKFW (95 aa)).

This sequence belongs to the glycosyl hydrolase 85 family.

The protein resides in the cytoplasm. Its subcellular location is the cytosol. It catalyses the reaction an N(4)-(oligosaccharide-(1-&gt;3)-[oligosaccharide-(1-&gt;6)]-beta-D-Man-(1-&gt;4)-beta-D-GlcNAc-(1-&gt;4)-alpha-D-GlcNAc)-L-asparaginyl-[protein] + H2O = an oligosaccharide-(1-&gt;3)-[oligosaccharide-(1-&gt;6)]-beta-D-Man-(1-&gt;4)-D-GlcNAc + N(4)-(N-acetyl-beta-D-glucosaminyl)-L-asparaginyl-[protein]. In terms of biological role, endoglycosidase that releases N-glycans from glycoproteins by cleaving the beta-1,4-glycosidic bond in the N,N'-diacetylchitobiose core. Involved in the processing of free oligosaccharides in the cytosol. This is Cytosolic endo-beta-N-acetylglucosaminidase (Engase) from Mus musculus (Mouse).